The following is a 70-amino-acid chain: Disintegrin triflavin (70 aa).

The 70-residue stretch at 1–70 folds into the Disintegrin domain; the sequence is GEECDCGSPS…SADCPRWNGL (70 aa). 6 disulfides stabilise this stretch: Cys-4–Cys-19, Cys-6–Cys-14, Cys-13–Cys-36, Cys-27–Cys-33, Cys-32–Cys-57, and Cys-45–Cys-64. A Cell attachment site motif is present at residues 49 to 51; sequence RGD.

The protein belongs to the venom metalloproteinase (M12B) family. P-II subfamily. P-IIa sub-subfamily. In terms of assembly, monomer. In terms of tissue distribution, expressed by the venom gland.

The protein resides in the secreted. Functionally, inhibits fibrinogen interaction with platelets. Acts by binding to alpha-IIb/beta-3 (ITGA2B/ITGB3) on the platelet surface and inhibits aggregation induced by ADP, thrombin, platelet-activating factor and collagen. The chain is Disintegrin triflavin from Protobothrops flavoviridis (Habu).